Consider the following 137-residue polypeptide: Large-conductance mechanosensitive channel (137 aa).

Transmembrane regions (helical) follow at residues phenylalanine 10–glycine 30 and glycine 76–isoleucine 96.

It belongs to the MscL family. As to quaternary structure, homopentamer.

The protein resides in the cell inner membrane. Its function is as follows. Channel that opens in response to stretch forces in the membrane lipid bilayer. May participate in the regulation of osmotic pressure changes within the cell. This Pectobacterium carotovorum subsp. carotovorum (strain PC1) protein is Large-conductance mechanosensitive channel.